Here is a 963-residue protein sequence, read N- to C-terminus: Protocadherin alpha-C1 (963 aa).

An N-terminal signal peptide occupies residues 1 to 18 (MVGCGVAVLCLWVSCGAA). 5 consecutive Cadherin domains span residues 19-124 (AGQL…SPLF), 125-233 (PAGD…APVF), 234-340 (ERSV…APEL), 349-445 (VPED…TPNF), and 446-555 (PQPQ…YPVI). At 19–683 (AGQLEYSVPE…GGQLSAQNLY (665 aa)) the chain is on the extracellular side. N-linked (GlcNAc...) asparagine glycosylation is present at Asn-38. 2 N-linked (GlcNAc...) asparagine glycosylation sites follow: Asn-248 and Asn-274. The N-linked (GlcNAc...) asparagine glycan is linked to Asn-562. Residues 570–667 (VPRSARTGHL…NSVPQLLPDF (98 aa)) form the Cadherin 6 domain. Residues 684 to 704 (LVIALACISFLFLGCLLFFVC) form a helical membrane-spanning segment. The Cytoplasmic segment spans residues 705–963 (TKLHQSPGCC…GNSTTDNSDQ (259 aa)). 4 PXXP repeats span residues 812–815 (PRQP), 845–848 (PGGP), 886–889 (PGNP), and 904–907 (PGSP). Positions 812–907 (PRQPNPDWRY…PDKFIIPGSP (96 aa)) are 4 X 4 AA repeats of P-X-X-P. Residues 844 to 963 (GPGGPDQQWP…GNSTTDNSDQ (120 aa)) are disordered. Residues 922–936 (DKSDFITFGKKEETK) are compositionally biased toward basic and acidic residues.

Its subcellular location is the cell membrane. In terms of biological role, potential calcium-dependent cell-adhesion protein. May be involved in the establishment and maintenance of specific neuronal connections in the brain. The polypeptide is Protocadherin alpha-C1 (PCDHAC1) (Homo sapiens (Human)).